The following is a 692-amino-acid chain: Meiotic sister-chromatid recombination protein 6, mitochondrial (692 aa).

The transit peptide at 1 to 30 (MLSHNALRAFDCSKVIISRRCLTSSTSIYQ) directs the protein to the mitochondrion.

The protein localises to the mitochondrion. May be involved in the control of meiotic sister-chromatid recombination. The protein is Meiotic sister-chromatid recombination protein 6, mitochondrial (MSC6) of Saccharomyces cerevisiae (strain ATCC 204508 / S288c) (Baker's yeast).